The sequence spans 920 residues: Coatomer subunit beta'-1 (920 aa).

WD repeat units lie at residues 13–52 (QRSE…MVKS), 55–94 (VTEL…KIKV), 97–136 (AHAD…LCTQ), 140–180 (GHSH…PNFT), 183–224 (AHLK…CVQT), 227–266 (GHTH…LENT), 350–392 (TCDL…GSAL), and 460–500 (RIDV…SYFD). Positions 850–920 (LEQGDVLDEV…EQWVLTPPQE (71 aa)) are disordered. Over residues 854–875 (DVLDEVGEEGEDGEEEEEEDRQ) the composition is skewed to acidic residues.

The protein belongs to the WD repeat COPB2 family. Oligomeric complex that consists of at least the alpha, beta, beta', gamma, delta, epsilon and zeta subunits.

Its subcellular location is the cytoplasm. The protein resides in the golgi apparatus membrane. The protein localises to the cytoplasmic vesicle. It is found in the COPI-coated vesicle membrane. The coatomer is a cytosolic protein complex that binds to dilysine motifs and reversibly associates with Golgi non-clathrin-coated vesicles, which further mediate biosynthetic protein transport from the ER, via the Golgi up to the trans Golgi network. Coatomer complex is required for budding from Golgi membranes, and is essential for the retrograde Golgi-to-ER transport of dilysine-tagged proteins. The polypeptide is Coatomer subunit beta'-1 (Arabidopsis thaliana (Mouse-ear cress)).